Reading from the N-terminus, the 442-residue chain is Serine--tRNA ligase (442 aa).

249–251 (TSE) lines the L-serine pocket. 280 to 282 (RSE) provides a ligand contact to ATP. L-serine is bound at residue Glu-303. An ATP-binding site is contributed by 367 to 370 (EISS). Ser-402 provides a ligand contact to L-serine.

It belongs to the class-II aminoacyl-tRNA synthetase family. Type-1 seryl-tRNA synthetase subfamily. As to quaternary structure, homodimer. The tRNA molecule binds across the dimer.

Its subcellular location is the cytoplasm. It catalyses the reaction tRNA(Ser) + L-serine + ATP = L-seryl-tRNA(Ser) + AMP + diphosphate + H(+). It carries out the reaction tRNA(Sec) + L-serine + ATP = L-seryl-tRNA(Sec) + AMP + diphosphate + H(+). Its pathway is aminoacyl-tRNA biosynthesis; selenocysteinyl-tRNA(Sec) biosynthesis; L-seryl-tRNA(Sec) from L-serine and tRNA(Sec): step 1/1. Catalyzes the attachment of serine to tRNA(Ser). Is also able to aminoacylate tRNA(Sec) with serine, to form the misacylated tRNA L-seryl-tRNA(Sec), which will be further converted into selenocysteinyl-tRNA(Sec). The chain is Serine--tRNA ligase from Acidovorax sp. (strain JS42).